The chain runs to 209 residues: C-type lectin domain family 6 member A (209 aa).

Over 1-20 the chain is Cytoplasmic; sequence MVQERHPQRKGVCWTLRLWS. The helical; Signal-anchor for type II membrane protein transmembrane segment at 21–43 threads the bilayer; it reads TAVISMLLLSTCFIASCMVTYQF. Over 44 to 209 the chain is Extracellular; the sequence is TMEKPNRRLS…SICETKKIYL (166 aa). 2 disulfide bridges follow: Cys-64/Cys-78 and Cys-79/Cys-90. In terms of domain architecture, C-type lectin spans 86–203; sequence FGSSCYLIST…CDSKHNSICE (118 aa). The Ca(2+) site is built by Val-116, Asn-118, and Glu-122. Asn-131 carries an N-linked (GlcNAc...) asparagine glycan. The Ca(2+) site is built by Glu-168, Asn-170, and Glu-174. Alpha-D-mannopyranose contacts are provided by residues 168-170, Glu-174, Trp-182, and 190-191; these read EPN and ND. A disulfide bridge connects residues Cys-176 and Cys-194. Residues Asn-190, Asp-191, and Glu-203 each coordinate Ca(2+).

In terms of assembly, associated with FCER1G. Heterodimer with CLEC4D; this heterodimer forms a pattern recognition receptor (PRR) against fungal infection.

The protein localises to the cell membrane. Functionally, calcium-dependent lectin that acts as a pattern recognition receptor (PRR) of the innate immune system: specifically recognizes and binds alpha-mannans on C.albicans hypheas. Binding of C.albicans alpha-mannans to this receptor complex leads to phosphorylation of the immunoreceptor tyrosine-based activation motif (ITAM) of FCER1G, triggering activation of SYK, CARD9 and NF-kappa-B, consequently driving maturation of antigen-presenting cells and shaping antigen-specific priming of T-cells toward effector T-helper 1 and T-helper 17 cell subtypes. Also recognizes, in a mannose-dependent manner, allergens from house dust mite and fungi, by promoting cysteinyl leukotriene production. Recognizes soluble elements from the eggs of Shistosoma mansoni altering adaptive immune responses. This Rattus norvegicus (Rat) protein is C-type lectin domain family 6 member A (CLEC6A).